Here is a 185-residue protein sequence, read N- to C-terminus: Potassium-transporting ATPase KdpC subunit (185 aa).

A helical membrane pass occupies residues 11 to 31; the sequence is LALLMTLVTGALYPLAVTGIA.

This sequence belongs to the KdpC family. In terms of assembly, the system is composed of three essential subunits: KdpA, KdpB and KdpC.

The protein localises to the cell inner membrane. Functionally, part of the high-affinity ATP-driven potassium transport (or Kdp) system, which catalyzes the hydrolysis of ATP coupled with the electrogenic transport of potassium into the cytoplasm. This subunit acts as a catalytic chaperone that increases the ATP-binding affinity of the ATP-hydrolyzing subunit KdpB by the formation of a transient KdpB/KdpC/ATP ternary complex. This chain is Potassium-transporting ATPase KdpC subunit, found in Pseudomonas putida (strain ATCC 47054 / DSM 6125 / CFBP 8728 / NCIMB 11950 / KT2440).